Consider the following 149-residue polypeptide: Transcriptional repressor NrdR (149 aa).

Residues 3-34 (CPFCSTEETKVIDSRLVSEGYQVRRRRECGNC) fold into a zinc finger. An ATP-cone domain is found at 49 to 139 (PKVIKNDGTR…VYLSFDDINQ (91 aa)).

The protein belongs to the NrdR family. Requires Zn(2+) as cofactor.

Its function is as follows. Negatively regulates transcription of bacterial ribonucleotide reductase nrd genes and operons by binding to NrdR-boxes. The chain is Transcriptional repressor NrdR from Pasteurella multocida (strain Pm70).